We begin with the raw amino-acid sequence, 726 residues long: Biotin--protein ligase (726 aa).

Residues 28 to 98 form a disordered region; that stretch reads EVKDQVSNKQ…SDRGGGPVEH (71 aa). The segment covering 43–75 has biased composition (basic and acidic residues); the sequence is PKPEPSLEIKPEQDGMEHVGRDDPKALGEEPKQ. Serine 147 and serine 299 each carry phosphoserine. A BPL/LPL catalytic domain is found at 463 to 652; sequence KQLGKVILFA…VLEKLIKEFQ (190 aa).

The protein belongs to the biotin--protein ligase family. Monomer. As to expression, widely expressed. Mostly expressed in muscle, placenta and to a lower extent in the brain, kidney, pancreas, liver and lung.

It localises to the cytoplasm. Its subcellular location is the mitochondrion. The enzyme catalyses apo-[methylmalonyl-CoA:pyruvate carboxytransferase] + biotin + ATP = holo-[methylmalonyl-CoA:pyruvate carboxytransferase] + AMP + diphosphate + H(+). It carries out the reaction apo-[propionyl-CoA:carbon-dioxide ligase (ADP-forming)] + biotin + ATP = holo-[propionyl-CoA:carbon-dioxide ligase (ADP-forming)] + AMP + diphosphate + H(+). The catalysed reaction is apo-[3-methylcrotonoyl-CoA:carbon-dioxide ligase (ADP-forming)] + biotin + ATP = holo-[3-methylcrotonoyl-CoA:carbon-dioxide ligase (ADP-forming)] + AMP + diphosphate + H(+). It catalyses the reaction biotin + L-lysyl-[protein] + ATP = N(6)-biotinyl-L-lysyl-[protein] + AMP + diphosphate + H(+). In terms of biological role, biotin--protein ligase catalyzing the biotinylation of the 4 biotin-dependent carboxylases acetyl-CoA-carboxylase, pyruvate carboxylase, propionyl-CoA carboxylase, and methylcrotonyl-CoA carboxylase. In Homo sapiens (Human), this protein is Biotin--protein ligase.